The chain runs to 312 residues: Pyridoxal 5'-phosphate synthase subunit PDX1 (312 aa).

D43 is a D-ribose 5-phosphate binding site. The active-site Schiff-base intermediate with D-ribose 5-phosphate is K100. G172 is a binding site for D-ribose 5-phosphate. A D-glyceraldehyde 3-phosphate-binding site is contributed by R184. D-ribose 5-phosphate is bound by residues G233 and 254–255; that span reads GS.

The protein belongs to the PdxS/SNZ family.

The catalysed reaction is aldehydo-D-ribose 5-phosphate + D-glyceraldehyde 3-phosphate + L-glutamine = pyridoxal 5'-phosphate + L-glutamate + phosphate + 3 H2O + H(+). It participates in cofactor biosynthesis; pyridoxal 5'-phosphate biosynthesis. Catalyzes the formation of pyridoxal 5'-phosphate from ribose 5-phosphate (RBP), glyceraldehyde 3-phosphate (G3P) and ammonia. The ammonia is provided by PDX2. Can also use ribulose 5-phosphate and dihydroxyacetone phosphate as substrates, resulting from enzyme-catalyzed isomerization of RBP and G3P, respectively. Also plays an indirect role in resistance to singlet oxygen-generating photosensitizers. The sequence is that of Pyridoxal 5'-phosphate synthase subunit PDX1 (PDX1) from Phaseolus vulgaris (Kidney bean).